A 208-amino-acid polypeptide reads, in one-letter code: MFALSARHALRRTRIFAIPRFFADSRQDSDNPDKRYSGPAATMDNKSEKVTVNKEELRKRLTPVQYQVTQEAGTERPFTGCYNKHYEKGVYQCIVCHQDLFSSETKYDSGCGWPAFNDVLDKGKVTLHRDASIPGGNILLLIAHPERIRTEVRCARCNAHMGHVFEDGPKPTRKRYCINSASIEFVNADPATSSPPVATPTAAPIAQQ.

A compositionally biased stretch (basic and acidic residues) spans 27–36; it reads QDSDNPDKRY. Residues 27 to 48 are disordered; that stretch reads QDSDNPDKRYSGPAATMDNKSE. The 135-residue stretch at 54–188 folds into the MsrB domain; it reads KEELRKRLTP…NSASIEFVNA (135 aa). The Zn(2+) site is built by cysteine 93, cysteine 96, cysteine 154, and cysteine 157. Cysteine 111 and cysteine 177 are disulfide-bonded. Residue cysteine 177 is the Nucleophile of the active site. Residues 189–208 form a disordered region; the sequence is DPATSSPPVATPTAAPIAQQ.

This sequence belongs to the MsrB Met sulfoxide reductase family. It depends on Zn(2+) as a cofactor. Present in the embryonic nervous system (brain and cord) in neuronal cell bodies, along axons. Also present in embryonic muscles in motor axons. Localizes to growing bristle tips where it is distributed in small puntae. Present at and at sites of actin localization.

The protein localises to the cytoplasm. The protein resides in the nucleus. Its subcellular location is the cytoskeleton. The catalysed reaction is L-methionyl-[protein] + [thioredoxin]-disulfide + H2O = L-methionyl-(R)-S-oxide-[protein] + [thioredoxin]-dithiol. In terms of biological role, methionine-sulfoxide reductase that specifically reduces methionine (R)-sulfoxide back to methionine. While in many cases methionine oxidation is the result of random oxidation following oxidative stress, methionine oxidation is also a post-translational modification that takes place on specific residues. Acts as a regulator of actin assembly by reducing methionine (R)-sulfoxide mediated by Mical on actin thereby promoting filament repolymerization. This Drosophila melanogaster (Fruit fly) protein is Methionine-R-sulfoxide reductase B1 (SelR).